The primary structure comprises 83 residues: Late seed maturation protein P8B6 (83 aa).

Basic and acidic residues-rich tracts occupy residues 1-18 and 37-51; these read MASQ…KKGE and AEGR…KEQL. The disordered stretch occupies residues 1–83; it reads MASQQEKKQL…DAEDEPSTRT (83 aa). A compositionally biased stretch (acidic residues) spans 73-83; that stretch reads EDAEDEPSTRT.

This sequence belongs to the small hydrophilic plant seed protein family.

It localises to the cytoplasm. Functionally, this protein may play a role in equipping the seed for survival, maintaining a minimal level of hydration in the dry organism and preventing the denaturation of cytoplasmic components, or may play a role during imbibition by controlling water uptake. This Raphanus sativus (Radish) protein is Late seed maturation protein P8B6.